A 900-amino-acid polypeptide reads, in one-letter code: Iodate reductase subunit IdrA (900 aa).

A disordered region spans residues methionine 1 to valine 21. [3Fe-4S] cluster contacts are provided by cysteine 35, cysteine 38, and cysteine 42.

The protein belongs to the prokaryotic molybdopterin-containing oxidoreductase family. As to quaternary structure, the iodate reductase (Idr) complex is composed of a molybdopterin-dependent iodate reductase (IdrA and IdrB subunits) and two associated peroxidases (IdrP1 and IdrP2). [3Fe-4S] cluster is required as a cofactor. It depends on Mo-bis(molybdopterin guanine dinucleotide) as a cofactor.

The protein localises to the periplasm. Functionally, involved in iodate respiration. May accept electrons from cytochrome c551, and catalyze the reduction of iodate (IO(3)(-)) to produce the chemically unstable intermediate hypoiodous acid (HIO). This intermediate then undergoes abiotic disproportionation to yield two molecules of iodide (I(-)) and one molecule of iodate. The resultant iodate subsequently cycles back into the reductive pathway. The initial reduction of iodate may inadvertently produce low levels of incidental toxic H(2)O(2), which is detoxified by IdrP1 and IdrP2. The polypeptide is Iodate reductase subunit IdrA (Denitromonas iodatirespirans).